The following is a 387-amino-acid chain: Colicin-N (387 aa).

Polar residues predominate over residues 1 to 11; the sequence is MGSNGADNAHN. Residues 1 to 106 are disordered; that stretch reads MGSNGADNAH…ITITPDNSKP (106 aa). Gly residues predominate over residues 14-30; sequence FGGGKNPGIGNTSGAGS. The span at 31–48 shows a compositional bias: low complexity; it reads NGSASSNRGNSNGWSWSN. Positions 78–87 are enriched in gly residues; it reads GNSGNRGNNG. 2 consecutive transmembrane segments (helical) span residues 325 to 345 and 350 to 370; these read IIGG…LSFL and LAVT…SSFI.

The protein belongs to the channel forming colicin family.

It localises to the cell membrane. In terms of biological role, this colicin is a channel-forming colicin. This class of transmembrane toxins depolarize the cytoplasmic membrane, leading to dissipation of cellular energy. Its function is as follows. Colicins are polypeptide toxins produced by and active against E.coli and closely related bacteria. The protein is Colicin-N (cna) of Escherichia coli.